Consider the following 72-residue polypeptide: uncharacterized protein (72 aa).

This is an uncharacterized protein from Schizosaccharomyces pombe (strain 972 / ATCC 24843) (Fission yeast).